The sequence spans 162 residues: Class I hydrophobin dewC (162 aa).

The first 21 residues, 1 to 21, serve as a signal peptide directing secretion; it reads MQFTIASLIATAVLGLQMASA. Disulfide bonds link C43–C119, C50–C113, C51–C90, and C120–C156.

The protein belongs to the fungal hydrophobin family. Self-assembles to form functional amyloid fibrils called rodlets. Self-assembly into fibrillar rodlets occurs spontaneously at hydrophobic:hydrophilic interfaces and the rodlets further associate laterally to form amphipathic monolayers.

Its subcellular location is the secreted. The protein localises to the spore wall. Its function is as follows. Aerial growth, conidiation, and dispersal of filamentous fungi in the environment rely upon a capability of their secreting small amphipathic proteins called hydrophobins (HPBs) with low sequence identity. Class I can self-assemble into an outermost layer of rodlet bundles on aerial cell surfaces, conferring cellular hydrophobicity that supports fungal growth, development and dispersal; whereas Class II form highly ordered films at water-air interfaces through intermolecular interactions but contribute nothing to the rodlet structure. DewC is a class I hydrophobin that contributes to the hydrophobicity of the spore surface. The protein is Class I hydrophobin dewC of Emericella nidulans (strain FGSC A4 / ATCC 38163 / CBS 112.46 / NRRL 194 / M139) (Aspergillus nidulans).